The sequence spans 90 residues: SAGA-associated factor 11 (90 aa).

The SGF11-type zinc-finger motif lies at 63–84 (FSCDNCGRKIAGGRFAQHINKC).

It belongs to the SGF11 family. As to quaternary structure, component of the 1.8 MDa SAGA transcription coactivator-HAT complex. SAGA is built of 5 distinct domains with specialized functions. Within the SAGA complex, SUS1, SGF11, SGF73 and UBP8 form an additional subcomplex of SAGA called the DUB module (deubiquitination module). Interacts directly with SGF73, SUS1 and UBP8.

The protein resides in the nucleus. Its function is as follows. Functions as a component of the transcription regulatory histone acetylation (HAT) complex SAGA. At the promoters, SAGA is required for recruitment of the basal transcription machinery. It influences RNA polymerase II transcriptional activity through different activities such as TBP interaction and promoter selectivity, interaction with transcription activators, and chromatin modification through histone acetylation and deubiquitination. SAGA acetylates nucleosomal histone H3 to some extent (to form H3K9ac, H3K14ac, H3K18ac and H3K23ac). SAGA interacts with DNA via upstream activating sequences (UASs). Involved in transcriptional regulation of a subset of SAGA-regulated genes. Within the SAGA complex, participates in a subcomplex, that specifically deubiquitinates histones H2B. The protein is SAGA-associated factor 11 of Lodderomyces elongisporus (strain ATCC 11503 / CBS 2605 / JCM 1781 / NBRC 1676 / NRRL YB-4239) (Yeast).